The following is a 294-amino-acid chain: Large ribosomal subunit protein uL18B (294 aa).

Belongs to the universal ribosomal protein uL18 family. Component of the large ribosomal subunit (LSU). Mature yeast ribosomes consist of a small (40S) and a large (60S) subunit. The 40S small subunit contains 1 molecule of ribosomal RNA (18S rRNA) and 33 different proteins (encoded by 57 genes). The large 60S subunit contains 3 rRNA molecules (25S, 5.8S and 5S rRNA) and 46 different proteins (encoded by 81 genes). Component of a hexameric 5S RNP precursor complex, composed of 5S RNA, rrs1, rpf2, rpl5a/rpl5b, rpl11a/rpl11b and syo1; this complex acts as a precursor for ribosome assembly. rpl5a/rpl5b/uL18 forms a heterotrimeric complex with syo1 and rpl11a/rpl11b/uL5. Interaction of this complex with KAP104 allows the nuclear import of the heterotrimer.

The protein localises to the cytoplasm. The protein resides in the nucleus. Functionally, component of the ribosome, a large ribonucleoprotein complex responsible for the synthesis of proteins in the cell. The small ribosomal subunit (SSU) binds messenger RNAs (mRNAs) and translates the encoded message by selecting cognate aminoacyl-transfer RNA (tRNA) molecules. The large subunit (LSU) contains the ribosomal catalytic site termed the peptidyl transferase center (PTC), which catalyzes the formation of peptide bonds, thereby polymerizing the amino acids delivered by tRNAs into a polypeptide chain. The nascent polypeptides leave the ribosome through a tunnel in the LSU and interact with protein factors that function in enzymatic processing, targeting, and the membrane insertion of nascent chains at the exit of the ribosomal tunnel. This chain is Large ribosomal subunit protein uL18B (rpl502), found in Schizosaccharomyces pombe (strain 972 / ATCC 24843) (Fission yeast).